A 394-amino-acid chain; its full sequence is Quinolinate synthase (394 aa).

Positions 57 and 74 each coordinate iminosuccinate. Residue Cys-121 participates in [4Fe-4S] cluster binding. Residues 153–155 and Ser-174 each bind iminosuccinate; that span reads YMN. Cys-250 lines the [4Fe-4S] cluster pocket. Residues 276 to 278 and Thr-293 each bind iminosuccinate; that span reads HPE. Cys-340 serves as a coordination point for [4Fe-4S] cluster.

It belongs to the quinolinate synthase family. Type 3 subfamily. [4Fe-4S] cluster serves as cofactor.

The protein resides in the cytoplasm. It catalyses the reaction iminosuccinate + dihydroxyacetone phosphate = quinolinate + phosphate + 2 H2O + H(+). The protein operates within cofactor biosynthesis; NAD(+) biosynthesis; quinolinate from iminoaspartate: step 1/1. Functionally, catalyzes the condensation of iminoaspartate with dihydroxyacetone phosphate to form quinolinate. The sequence is that of Quinolinate synthase from Nocardioides sp. (strain ATCC BAA-499 / JS614).